Consider the following 344-residue polypeptide: N-acetyl-gamma-glutamyl-phosphate reductase (344 aa).

Cys-150 is a catalytic residue.

Belongs to the NAGSA dehydrogenase family. Type 1 subfamily.

The protein localises to the cytoplasm. The enzyme catalyses N-acetyl-L-glutamate 5-semialdehyde + phosphate + NADP(+) = N-acetyl-L-glutamyl 5-phosphate + NADPH + H(+). It participates in amino-acid biosynthesis; L-arginine biosynthesis; N(2)-acetyl-L-ornithine from L-glutamate: step 3/4. Catalyzes the NADPH-dependent reduction of N-acetyl-5-glutamyl phosphate to yield N-acetyl-L-glutamate 5-semialdehyde. This is N-acetyl-gamma-glutamyl-phosphate reductase from Pseudomonas entomophila (strain L48).